Reading from the N-terminus, the 502-residue chain is Lysine--tRNA ligase (502 aa).

2 residues coordinate Mg(2+): E409 and E416.

Belongs to the class-II aminoacyl-tRNA synthetase family. In terms of assembly, homodimer. Mg(2+) serves as cofactor.

It localises to the cytoplasm. The enzyme catalyses tRNA(Lys) + L-lysine + ATP = L-lysyl-tRNA(Lys) + AMP + diphosphate. This Shouchella clausii (strain KSM-K16) (Alkalihalobacillus clausii) protein is Lysine--tRNA ligase.